Reading from the N-terminus, the 166-residue chain is Cyclic pyranopterin monophosphate synthase (166 aa).

Substrate contacts are provided by residues 83 to 85 (LCH) and 121 to 122 (ME). Asp-136 is an active-site residue.

This sequence belongs to the MoaC family. In terms of assembly, homohexamer; trimer of dimers.

The catalysed reaction is (8S)-3',8-cyclo-7,8-dihydroguanosine 5'-triphosphate = cyclic pyranopterin phosphate + diphosphate. It participates in cofactor biosynthesis; molybdopterin biosynthesis. Its function is as follows. Catalyzes the conversion of (8S)-3',8-cyclo-7,8-dihydroguanosine 5'-triphosphate to cyclic pyranopterin monophosphate (cPMP). This Trichodesmium erythraeum (strain IMS101) protein is Cyclic pyranopterin monophosphate synthase.